A 152-amino-acid chain; its full sequence is Nucleoside diphosphate kinase (152 aa).

6 residues coordinate ATP: lysine 11, phenylalanine 59, arginine 87, threonine 93, arginine 104, and asparagine 114. Histidine 117 functions as the Pros-phosphohistidine intermediate in the catalytic mechanism.

The protein belongs to the NDK family. As to quaternary structure, homotetramer. Requires Mg(2+) as cofactor.

It is found in the cytoplasm. The catalysed reaction is a 2'-deoxyribonucleoside 5'-diphosphate + ATP = a 2'-deoxyribonucleoside 5'-triphosphate + ADP. It catalyses the reaction a ribonucleoside 5'-diphosphate + ATP = a ribonucleoside 5'-triphosphate + ADP. Major role in the synthesis of nucleoside triphosphates other than ATP. The ATP gamma phosphate is transferred to the NDP beta phosphate via a ping-pong mechanism, using a phosphorylated active-site intermediate. This chain is Nucleoside diphosphate kinase, found in Prochlorococcus marinus subsp. pastoris (strain CCMP1986 / NIES-2087 / MED4).